We begin with the raw amino-acid sequence, 568 residues long: Protein yellow (568 aa).

The first 28 residues, 1–28 (MHAQDKGGILPALSLLLIAVAMVSPSQA), serve as a signal peptide directing secretion. N-linked (GlcNAc...) asparagine glycans are attached at residues N151 and N222.

Belongs to the major royal jelly protein family.

Its subcellular location is the secreted. Its function is as follows. Controls the pigmentation pattern of the adult cuticle and larval mouth parts. The chain is Protein yellow (y) from Drosophila subobscura (Fruit fly).